The sequence spans 441 residues: Chromosome partition protein MukF (441 aa).

The tract at residues 208–236 is leucine-zipper; the sequence is LTETSSTLRELQDTLEAAGDKLQTSLLSI.

The protein belongs to the MukF family. As to quaternary structure, interacts, and probably forms a ternary complex, with MukE and MukB via its C-terminal region. The complex formation is stimulated by calcium or magnesium. It is required for an interaction between MukE and MukB.

Its subcellular location is the cytoplasm. It localises to the nucleoid. Its function is as follows. Involved in chromosome condensation, segregation and cell cycle progression. May participate in facilitating chromosome segregation by condensation DNA from both sides of a centrally located replisome during cell division. Not required for mini-F plasmid partitioning. Probably acts via its interaction with MukB and MukE. Overexpression results in anucleate cells. It has a calcium binding activity. The sequence is that of Chromosome partition protein MukF from Pectobacterium atrosepticum (strain SCRI 1043 / ATCC BAA-672) (Erwinia carotovora subsp. atroseptica).